The chain runs to 309 residues: GTP cyclohydrolase MptA (309 aa).

Belongs to the GTP cyclohydrolase IV family. Homodimer. Fe(2+) is required as a cofactor.

The catalysed reaction is GTP + H2O = 7,8-dihydroneopterin 2',3'-cyclic phosphate + formate + diphosphate + H(+). Its pathway is cofactor biosynthesis; 5,6,7,8-tetrahydromethanopterin biosynthesis. Converts GTP to 7,8-dihydro-D-neopterin 2',3'-cyclic phosphate, the first intermediate in the biosynthesis of coenzyme methanopterin. In Methanococcus aeolicus (strain ATCC BAA-1280 / DSM 17508 / OCM 812 / Nankai-3), this protein is GTP cyclohydrolase MptA.